Consider the following 395-residue polypeptide: tRNA-specific 2-thiouridylase MnmA (395 aa).

ATP is bound by residues 7-14 (GLSGGVDS) and Met33. The tract at residues 95–97 (NPD) is interaction with target base in tRNA. The active-site Nucleophile is the Cys100. Cysteines 100 and 200 form a disulfide. Gly124 is an ATP binding site. An interaction with tRNA region spans residues 150 to 152 (KDQ). Residue Cys200 is the Cysteine persulfide intermediate of the active site. The interaction with tRNA stretch occupies residues 346 to 347 (RY).

This sequence belongs to the MnmA/TRMU family.

Its subcellular location is the cytoplasm. The enzyme catalyses S-sulfanyl-L-cysteinyl-[protein] + uridine(34) in tRNA + AH2 + ATP = 2-thiouridine(34) in tRNA + L-cysteinyl-[protein] + A + AMP + diphosphate + H(+). In terms of biological role, catalyzes the 2-thiolation of uridine at the wobble position (U34) of tRNA, leading to the formation of s(2)U34. The sequence is that of tRNA-specific 2-thiouridylase MnmA from Flavobacterium johnsoniae (strain ATCC 17061 / DSM 2064 / JCM 8514 / BCRC 14874 / CCUG 350202 / NBRC 14942 / NCIMB 11054 / UW101) (Cytophaga johnsonae).